A 678-amino-acid chain; its full sequence is MSPGPPAVGGVSPPVMVPGSAPPFQPTHQYFQHHYHQTPPGKLRDRSPRLSAEMRKNRDTATSSPASSGVSIQQRRGSTTQNSGVGSIGLPVLGGRGRGVMSDGHMQRTFHEAMRQRRTSLPANSLSLNGAKVTGSSLSEAKGLIADMLMNKELPGNVASCLRAVTMLLEQRPLPLNGLLNDFGLPSVVENPYGGESMVVGASKPRISNITFSTVTSATGLPTVPAEPNKARSSSYWKTEASPSNNNEHETPVDLLRKISVSRKESGTHVDTVVTTIDGQRYDTRELDTDPDLAETAVWSFPIFQMSRKHPQTILSRLTYNIFQQAELFRIFKVSPIKFFNFFHALEKGYWEIPYHNRIHAADVLHGCYYLSAHPVRSTFLTPKTPDSVLTPPHPHHQHSSIMSQLSTLELMALFTAAAMHDYDHPGRTNAFLVQVEDKKAILYNDRSVLENHHAAESWKLLNKPENHFIENLDPAEMKRFRYLVLEYILATDLKQHFEIIMTFTERLTEIDVQVETDRLLIGKLLIKMADINSPTKPYGLHRQWTDRICEEFYEQGDDERRRGLPITPYMDRGDAQVAKLQDSFIAHVVSPLATAMNECGLLPILPGLDTSELIINMEHNHRKWKEQIELENGGSYEAQITCNGGTAVNGVIEEESASTSDSPDPRRDSPLDSDLSQ.

Disordered stretches follow at residues 1–27 (MSPG…FQPT), 52–95 (AEMR…VLGG), and 223–250 (TVPA…NEHE). Over residues 7-19 (AVGGVSPPVMVPG) the composition is skewed to low complexity. 2 stretches are compositionally biased toward polar residues: residues 60–85 (TATS…NSGV) and 231–246 (ARSS…PSNN). In terms of domain architecture, PDEase spans 281–632 (RYDTRELDTD…RKWKEQIELE (352 aa)). H356 (proton donor) is an active-site residue. Residues H360, H421, D422, and D531 each coordinate a divalent metal cation. The segment at 654–678 (EEESASTSDSPDPRRDSPLDSDLSQ) is disordered.

It belongs to the cyclic nucleotide phosphodiesterase family. It depends on a divalent metal cation as a cofactor.

The enzyme catalyses a nucleoside 3',5'-cyclic phosphate + H2O = a nucleoside 5'-phosphate + H(+). This is Probable 3',5'-cyclic phosphodiesterase pde-3 (pde-3) from Caenorhabditis elegans.